The following is an 822-amino-acid chain: Glycerol-3-phosphate acyltransferase (822 aa).

Positions 304-309 match the HXXXXD motif motif; that stretch reads CHRSHM.

Belongs to the GPAT/DAPAT family.

The protein localises to the cell inner membrane. The catalysed reaction is sn-glycerol 3-phosphate + an acyl-CoA = a 1-acyl-sn-glycero-3-phosphate + CoA. The protein operates within phospholipid metabolism; CDP-diacylglycerol biosynthesis; CDP-diacylglycerol from sn-glycerol 3-phosphate: step 1/3. This chain is Glycerol-3-phosphate acyltransferase, found in Yersinia enterocolitica serotype O:8 / biotype 1B (strain NCTC 13174 / 8081).